Consider the following 184-residue polypeptide: DOMON domain-containing protein CBG21755 (184 aa).

The N-terminal stretch at 1–20 (MIVPISLLFLFLSFVPFSYS) is a signal peptide. A DOMON domain is found at 28–145 (EVASMSWMVK…CVNWIVVPGG (118 aa)). An N-linked (GlcNAc...) asparagine glycan is attached at Asn-49.

It is found in the secreted. This is DOMON domain-containing protein CBG21755 from Caenorhabditis briggsae.